A 492-amino-acid polypeptide reads, in one-letter code: Glutamate--tRNA ligase (492 aa).

The short motif at 13–23 is the 'HIGH' region element; sequence PSPTGTPHVGM. The short motif at 257–261 is the 'KMSKS' region element; sequence KLSKR. K260 contributes to the ATP binding site.

The protein belongs to the class-I aminoacyl-tRNA synthetase family. Glutamate--tRNA ligase type 1 subfamily. As to quaternary structure, monomer.

It localises to the cytoplasm. It catalyses the reaction tRNA(Glu) + L-glutamate + ATP = L-glutamyl-tRNA(Glu) + AMP + diphosphate. In terms of biological role, catalyzes the attachment of glutamate to tRNA(Glu) in a two-step reaction: glutamate is first activated by ATP to form Glu-AMP and then transferred to the acceptor end of tRNA(Glu). The protein is Glutamate--tRNA ligase of Mycolicibacterium paratuberculosis (strain ATCC BAA-968 / K-10) (Mycobacterium paratuberculosis).